We begin with the raw amino-acid sequence, 424 residues long: tRNA(Ile)-lysidine synthase (424 aa).

26-31 (SGGIDS) is a binding site for ATP.

This sequence belongs to the tRNA(Ile)-lysidine synthase family.

It localises to the cytoplasm. The catalysed reaction is cytidine(34) in tRNA(Ile2) + L-lysine + ATP = lysidine(34) in tRNA(Ile2) + AMP + diphosphate + H(+). Its function is as follows. Ligates lysine onto the cytidine present at position 34 of the AUA codon-specific tRNA(Ile) that contains the anticodon CAU, in an ATP-dependent manner. Cytidine is converted to lysidine, thus changing the amino acid specificity of the tRNA from methionine to isoleucine. In Streptococcus agalactiae serotype V (strain ATCC BAA-611 / 2603 V/R), this protein is tRNA(Ile)-lysidine synthase.